Here is a 637-residue protein sequence, read N- to C-terminus: Biosynthetic arginine decarboxylase (637 aa).

The residue at position 101 (Lys-101) is an N6-(pyridoxal phosphate)lysine. 286–296 lines the substrate pocket; it reads FDVGGGLAVDY.

Belongs to the Orn/Lys/Arg decarboxylase class-II family. SpeA subfamily. Mg(2+) serves as cofactor. Requires pyridoxal 5'-phosphate as cofactor.

The enzyme catalyses L-arginine + H(+) = agmatine + CO2. The protein operates within amine and polyamine biosynthesis; agmatine biosynthesis; agmatine from L-arginine: step 1/1. In terms of biological role, catalyzes the biosynthesis of agmatine from arginine. This Shewanella putrefaciens (strain CN-32 / ATCC BAA-453) protein is Biosynthetic arginine decarboxylase.